Consider the following 309-residue polypeptide: tRNA pseudouridine synthase B (309 aa).

Residue Asp52 is the Nucleophile of the active site.

The protein belongs to the pseudouridine synthase TruB family. Type 1 subfamily.

It catalyses the reaction uridine(55) in tRNA = pseudouridine(55) in tRNA. In terms of biological role, responsible for synthesis of pseudouridine from uracil-55 in the psi GC loop of transfer RNAs. This is tRNA pseudouridine synthase B from Leptospira interrogans serogroup Icterohaemorrhagiae serovar copenhageni (strain Fiocruz L1-130).